The chain runs to 248 residues: Proteasome subunit alpha (248 aa).

Ser-2 is modified (N-acetylserine; partial).

The protein belongs to the peptidase T1A family. In terms of assembly, the 20S proteasome core is composed of 14 alpha and 14 beta subunits that assemble into four stacked heptameric rings, resulting in a barrel-shaped structure. The two inner rings, each composed of seven catalytic beta subunits, are sandwiched by two outer rings, each composed of seven alpha subunits. The catalytic chamber with the active sites is on the inside of the barrel. Has a gated structure, the ends of the cylinder being occluded by the N-termini of the alpha-subunits. Is capped by the proteasome-associated ATPase, ARC.

It is found in the cytoplasm. Its pathway is protein degradation; proteasomal Pup-dependent pathway. The formation of the proteasomal ATPase ARC-20S proteasome complex, likely via the docking of the C-termini of ARC into the intersubunit pockets in the alpha-rings, may trigger opening of the gate for substrate entry. Interconversion between the open-gate and close-gate conformations leads to a dynamic regulation of the 20S proteasome proteolysis activity. Its function is as follows. Component of the proteasome core, a large protease complex with broad specificity involved in protein degradation. In Mycobacterium tuberculosis (strain CDC 1551 / Oshkosh), this protein is Proteasome subunit alpha.